We begin with the raw amino-acid sequence, 180 residues long: dCTP deaminase, dUMP-forming (180 aa).

Residues 100–105 (RSSLGR), Asp-117, 125–127 (TLE), Gln-146, Tyr-160, and Gln-167 each bind dCTP. The active-site Proton donor/acceptor is the Glu-127.

The protein belongs to the dCTP deaminase family. Homotrimer.

The catalysed reaction is dCTP + 2 H2O = dUMP + NH4(+) + diphosphate. The protein operates within pyrimidine metabolism; dUMP biosynthesis; dUMP from dCTP: step 1/1. Functionally, bifunctional enzyme that catalyzes both the deamination of dCTP to dUTP and the hydrolysis of dUTP to dUMP without releasing the toxic dUTP intermediate. This chain is dCTP deaminase, dUMP-forming, found in Persephonella marina (strain DSM 14350 / EX-H1).